A 432-amino-acid polypeptide reads, in one-letter code: D-amino acid dehydrogenase (432 aa).

3-17 (VLVLGSGVIGTASAY) contributes to the FAD binding site.

Belongs to the DadA oxidoreductase family. FAD is required as a cofactor.

The catalysed reaction is a D-alpha-amino acid + A + H2O = a 2-oxocarboxylate + AH2 + NH4(+). It functions in the pathway amino-acid degradation; D-alanine degradation; NH(3) and pyruvate from D-alanine: step 1/1. Functionally, oxidative deamination of D-amino acids. The protein is D-amino acid dehydrogenase of Ectopseudomonas mendocina (strain ymp) (Pseudomonas mendocina).